Reading from the N-terminus, the 155-residue chain is 3-hydroxyacyl-[acyl-carrier-protein] dehydratase FabZ (155 aa).

His-54 is a catalytic residue.

This sequence belongs to the thioester dehydratase family. FabZ subfamily.

The protein resides in the cytoplasm. It carries out the reaction a (3R)-hydroxyacyl-[ACP] = a (2E)-enoyl-[ACP] + H2O. Functionally, involved in unsaturated fatty acids biosynthesis. Catalyzes the dehydration of short chain beta-hydroxyacyl-ACPs and long chain saturated and unsaturated beta-hydroxyacyl-ACPs. The protein is 3-hydroxyacyl-[acyl-carrier-protein] dehydratase FabZ of Burkholderia ambifaria (strain MC40-6).